The primary structure comprises 348 residues: Aspartate carbamoyltransferase catalytic subunit (348 aa).

Carbamoyl phosphate is bound by residues Arg-59 and Thr-60. Lys-87 is an L-aspartate binding site. Carbamoyl phosphate is bound by residues Arg-109, His-142, and Gln-145. The L-aspartate site is built by Arg-182 and Arg-253. Residues Gly-294 and Pro-295 each coordinate carbamoyl phosphate.

It belongs to the aspartate/ornithine carbamoyltransferase superfamily. ATCase family. In terms of assembly, heterododecamer (2C3:3R2) of six catalytic PyrB chains organized as two trimers (C3), and six regulatory PyrI chains organized as three dimers (R2).

It catalyses the reaction carbamoyl phosphate + L-aspartate = N-carbamoyl-L-aspartate + phosphate + H(+). Its pathway is pyrimidine metabolism; UMP biosynthesis via de novo pathway; (S)-dihydroorotate from bicarbonate: step 2/3. Its function is as follows. Catalyzes the condensation of carbamoyl phosphate and aspartate to form carbamoyl aspartate and inorganic phosphate, the committed step in the de novo pyrimidine nucleotide biosynthesis pathway. This Prochlorococcus marinus (strain MIT 9313) protein is Aspartate carbamoyltransferase catalytic subunit.